Consider the following 466-residue polypeptide: Soluble pyridine nucleotide transhydrogenase (466 aa).

36–45 provides a ligand contact to FAD; it reads ERYQNVGGGC.

The protein belongs to the class-I pyridine nucleotide-disulfide oxidoreductase family. FAD is required as a cofactor.

Its subcellular location is the cytoplasm. It catalyses the reaction NAD(+) + NADPH = NADH + NADP(+). In terms of biological role, conversion of NADPH, generated by peripheral catabolic pathways, to NADH, which can enter the respiratory chain for energy generation. This Escherichia coli O9:H4 (strain HS) protein is Soluble pyridine nucleotide transhydrogenase.